Reading from the N-terminus, the 54-residue chain is uncharacterized protein (54 aa).

The disordered stretch occupies residues 13–54; that stretch reads VAGDSGGNPENISIGTTSGAVVNKGPEQIPKKKKEESKEKEE. A compositionally biased stretch (polar residues) spans 20–32; that stretch reads NPENISIGTTSGA. Residues 41 to 54 are compositionally biased toward basic and acidic residues; it reads IPKKKKEESKEKEE.

This is an uncharacterized protein from Enterobacteria phage T4 (Bacteriophage T4).